We begin with the raw amino-acid sequence, 469 residues long: 3-isopropylmalate dehydratase large subunit (469 aa).

[4Fe-4S] cluster contacts are provided by Cys-347, Cys-410, and Cys-413.

Belongs to the aconitase/IPM isomerase family. LeuC type 1 subfamily. As to quaternary structure, heterodimer of LeuC and LeuD. [4Fe-4S] cluster is required as a cofactor.

It carries out the reaction (2R,3S)-3-isopropylmalate = (2S)-2-isopropylmalate. The protein operates within amino-acid biosynthesis; L-leucine biosynthesis; L-leucine from 3-methyl-2-oxobutanoate: step 2/4. Its function is as follows. Catalyzes the isomerization between 2-isopropylmalate and 3-isopropylmalate, via the formation of 2-isopropylmaleate. The chain is 3-isopropylmalate dehydratase large subunit from Burkholderia mallei (strain NCTC 10247).